A 100-amino-acid chain; its full sequence is Large ribosomal subunit protein eL21 (100 aa).

This sequence belongs to the eukaryotic ribosomal protein eL21 family.

This Pyrobaculum aerophilum (strain ATCC 51768 / DSM 7523 / JCM 9630 / CIP 104966 / NBRC 100827 / IM2) protein is Large ribosomal subunit protein eL21.